A 521-amino-acid polypeptide reads, in one-letter code: Ribonuclease Y (521 aa).

Residues 5–25 (MMTMILAVIAAAIGFLIGNLL) form a helical membrane-spanning segment. Positions 211 to 271 (TVSVVALPSD…VRREVAKLSL (61 aa)) constitute a KH domain. The HD domain occupies 337-430 (VYQHSLEVAF…VQAADALSGA (94 aa)).

The protein belongs to the RNase Y family.

It localises to the cell membrane. Its function is as follows. Endoribonuclease that initiates mRNA decay. This is Ribonuclease Y from Geotalea uraniireducens (strain Rf4) (Geobacter uraniireducens).